A 130-amino-acid chain; its full sequence is Sulfurtransferase TusD (130 aa).

Catalysis depends on cysteine 78, which acts as the Cysteine persulfide intermediate.

Belongs to the DsrE/TusD family. Heterohexamer, formed by a dimer of trimers. The hexameric TusBCD complex contains 2 copies each of TusB, TusC and TusD. The TusBCD complex interacts with TusE.

The protein localises to the cytoplasm. Functionally, part of a sulfur-relay system required for 2-thiolation of 5-methylaminomethyl-2-thiouridine (mnm(5)s(2)U) at tRNA wobble positions. Accepts sulfur from TusA and transfers it in turn to TusE. In Buchnera aphidicola subsp. Baizongia pistaciae (strain Bp), this protein is Sulfurtransferase TusD.